Consider the following 376-residue polypeptide: Delta(12) fatty acid desaturase fat-2 (376 aa).

Helical transmembrane passes span Ile-45–Ile-65, Leu-69–Phe-89, Val-203–Cys-223, and Tyr-228–Ile-248.

Belongs to the fatty acid desaturase type 1 family.

It localises to the membrane. It catalyses the reaction (9Z)-octadecenoyl-CoA + 2 Fe(II)-[cytochrome b5] + O2 + 2 H(+) = (9Z,12Z)-octadecadienoyl-CoA + 2 Fe(III)-[cytochrome b5] + 2 H2O. The enzyme catalyses (9Z)-hexadecenoyl-CoA + 2 Fe(II)-[cytochrome b5] + O2 + 2 H(+) = (9Z,12Z)-hexadecadienoyl-CoA + 2 Fe(III)-[cytochrome b5] + 2 H2O. It carries out the reaction (9Z,12Z)-octadecadienoyl-CoA + 2 Fe(II)-[cytochrome b5] + O2 + 2 H(+) = (9Z,12Z,15Z)-octadecatrienoyl-CoA + 2 Fe(III)-[cytochrome b5] + 2 H2O. The catalysed reaction is (9Z)-heptadecenoyl-CoA + 2 Fe(II)-[cytochrome b5] + O2 + 2 H(+) = (9Z,12Z)-heptadecadienoyl-CoA + 2 Fe(III)-[cytochrome b5] + 2 H2O. It catalyses the reaction (9Z)-pentadecenoyl-CoA + 2 Fe(II)-[cytochrome b5] + O2 + 2 H(+) = (9Z,12Z)-pentadecadienoyl-CoA + 2 Fe(III)-[cytochrome b5] + 2 H2O. The enzyme catalyses (6Z,9Z,12Z)-octadecatrienoyl-CoA + 2 Fe(II)-[cytochrome b5] + O2 + 2 H(+) = (6Z,9Z,12Z,15Z)-octadecatetraenoyl-CoA + 2 Fe(III)-[cytochrome b5] + 2 H2O. It carries out the reaction (9Z)-tetradecenoyl-CoA + 2 Fe(II)-[cytochrome b5] + O2 + 2 H(+) = (9Z,12Z)-tetradecadienoyl-CoA + 2 Fe(III)-[cytochrome b5] + 2 H2O. It participates in lipid metabolism; polyunsaturated fatty acid biosynthesis. Can function as a Delta(12)/Delta(15) bifunctional desaturase and behaves as a nu +3' desaturase. Introduces a double bond in the fatty acid chain three carbons away from an existing double bond to biosynthesize polyunsaturated fatty acids (PUFAs) endogenously (PUFAs are essential for membrane structure and many cellular and physiological processes). Acts on a number of substrates like oleoyl-CoA ((9Z)-octadecenoyl-CoA, 18:1n-9), palmitoleoyl-CoA ((9Z)-hexadecenoyl-CoA, 16:1n-7), and gamma-linolenoyl-CoA ((6Z,9Z,12Z)-octadecatrienoyl-CoA, 18:3n-6), to generate linoleoyl-CoA ((9Z,12Z)-octadecadienoyl-CoA, 18:2n-6), (9Z,12Z)-hexadecadienoyl-CoA (16:2n-4) and (6Z,9Z,12Z,15Z)-octadecatetraenoyl-CoA (18:4n-3) respectively. Unlike plants, Caenorhabditis elegans desaturases seem to use fatty acyl-CoAs as substrates. In Caenorhabditis elegans, this protein is Delta(12) fatty acid desaturase fat-2 (fat-2).